Here is a 225-residue protein sequence, read N- to C-terminus: MLRIHKEGKIIIRNSLFILLLLNLALIGGVRMSKSVTTALGISSTLLGLWILYFFRNPTRLINKQEELILSPADGKVVAIKQIYEDEYFKEERIQISIFMSPFNVHVNRSPISGVLEYFKYHPGKYLVAFHPKSSTKNERTTAVVKRIDGIEVLFRQIAGFVARRIKFYPKVGDEVHQGDEVGFIKFGSRLDIFLPLNADIQVNLKEHVRGGKSIIAKIASEEEE.

Residue Ser-189 is the Schiff-base intermediate with substrate; via pyruvic acid of the active site. Position 189 is a pyruvic acid (Ser); by autocatalysis (Ser-189).

It belongs to the phosphatidylserine decarboxylase family. PSD-A subfamily. As to quaternary structure, heterodimer of a large membrane-associated beta subunit and a small pyruvoyl-containing alpha subunit. It depends on pyruvate as a cofactor. Is synthesized initially as an inactive proenzyme. Formation of the active enzyme involves a self-maturation process in which the active site pyruvoyl group is generated from an internal serine residue via an autocatalytic post-translational modification. Two non-identical subunits are generated from the proenzyme in this reaction, and the pyruvate is formed at the N-terminus of the alpha chain, which is derived from the carboxyl end of the proenzyme. The post-translation cleavage follows an unusual pathway, termed non-hydrolytic serinolysis, in which the side chain hydroxyl group of the serine supplies its oxygen atom to form the C-terminus of the beta chain, while the remainder of the serine residue undergoes an oxidative deamination to produce ammonia and the pyruvoyl prosthetic group on the alpha chain.

The protein resides in the cell membrane. The enzyme catalyses a 1,2-diacyl-sn-glycero-3-phospho-L-serine + H(+) = a 1,2-diacyl-sn-glycero-3-phosphoethanolamine + CO2. It participates in phospholipid metabolism; phosphatidylethanolamine biosynthesis; phosphatidylethanolamine from CDP-diacylglycerol: step 2/2. Functionally, catalyzes the formation of phosphatidylethanolamine (PtdEtn) from phosphatidylserine (PtdSer). The chain is Phosphatidylserine decarboxylase proenzyme from Amoebophilus asiaticus (strain 5a2).